Consider the following 353-residue polypeptide: Holliday junction branch migration complex subunit RuvB (353 aa).

Positions 1 to 182 (MPERLITPKG…FGIVQRLEFY (182 aa)) are large ATPase domain (RuvB-L). ATP contacts are provided by residues Ile-21, Arg-22, Gly-63, Lys-66, Thr-67, Thr-68, 129 to 131 (EDF), Arg-172, Tyr-182, and Arg-219. Thr-67 lines the Mg(2+) pocket. Positions 183–253 (NVQDLTRIVQ…VADRALDLLD (71 aa)) are small ATPAse domain (RuvB-S). A head domain (RuvB-H) region spans residues 256–353 (VQGFDAQDRR…QEEGGGEGKL (98 aa)). Residues Arg-292, Arg-311, and Arg-316 each contribute to the DNA site.

The protein belongs to the RuvB family. In terms of assembly, homohexamer. Forms an RuvA(8)-RuvB(12)-Holliday junction (HJ) complex. HJ DNA is sandwiched between 2 RuvA tetramers; dsDNA enters through RuvA and exits via RuvB. An RuvB hexamer assembles on each DNA strand where it exits the tetramer. Each RuvB hexamer is contacted by two RuvA subunits (via domain III) on 2 adjacent RuvB subunits; this complex drives branch migration. In the full resolvosome a probable DNA-RuvA(4)-RuvB(12)-RuvC(2) complex forms which resolves the HJ.

The protein localises to the cytoplasm. It catalyses the reaction ATP + H2O = ADP + phosphate + H(+). The RuvA-RuvB-RuvC complex processes Holliday junction (HJ) DNA during genetic recombination and DNA repair, while the RuvA-RuvB complex plays an important role in the rescue of blocked DNA replication forks via replication fork reversal (RFR). RuvA specifically binds to HJ cruciform DNA, conferring on it an open structure. The RuvB hexamer acts as an ATP-dependent pump, pulling dsDNA into and through the RuvAB complex. RuvB forms 2 homohexamers on either side of HJ DNA bound by 1 or 2 RuvA tetramers; 4 subunits per hexamer contact DNA at a time. Coordinated motions by a converter formed by DNA-disengaged RuvB subunits stimulates ATP hydrolysis and nucleotide exchange. Immobilization of the converter enables RuvB to convert the ATP-contained energy into a lever motion, pulling 2 nucleotides of DNA out of the RuvA tetramer per ATP hydrolyzed, thus driving DNA branch migration. The RuvB motors rotate together with the DNA substrate, which together with the progressing nucleotide cycle form the mechanistic basis for DNA recombination by continuous HJ branch migration. Branch migration allows RuvC to scan DNA until it finds its consensus sequence, where it cleaves and resolves cruciform DNA. This Thioalkalivibrio sulfidiphilus (strain HL-EbGR7) protein is Holliday junction branch migration complex subunit RuvB.